The chain runs to 216 residues: Large ribosomal subunit protein eL15 (216 aa).

Basic residues predominate over residues arginine 170–arginine 188. A disordered region spans residues arginine 170 to alanine 201. Residues lysine 189 to alanine 201 show a composition bias toward basic and acidic residues.

It belongs to the eukaryotic ribosomal protein eL15 family.

The protein is Large ribosomal subunit protein eL15 of Saccharolobus islandicus (strain M.16.27) (Sulfolobus islandicus).